The chain runs to 551 residues: MDRKVAREFRHKVDFLIENDAEKDYLYDVLRMYHQTMDVAVLVGDLKLVINEPSRLPLFDAIRPLIPLKHQVEYDQLTPRRSRKLKEVRLDRLHPEGLGLSVRGGLEFGCGLFISHLIKDGQADSVGLQVGDEIVRINGYSISSCTHEEVINLIRTKKTVSIKVRHIGLIPVKSSPDEPLKWQYVDQFVSESGGGRSSLGSPGSQENKEKKVFISLVGSRGLGCSISSGPIQKPGIFISHVKPGSLSAEVGLETGDQIVEVNGIDFSNLDHKEAVNVLKSSRSLTISIVAGAGRELFMTDQERLAEVRQRELQRQELLMQKRLAMESNKILQEQQEMERQRKKEIAQKAAEENERYRKEMEQIVEEEEKFRKQWEEDWGSKEQLRSPKTITAEVHPIPLRKPKYDLGVDPEFDPADDLDGGTNKRGEQDFRKYEEGFDPYSMFTPEQIMGKDVRLLRVKKEGALDLALEGGVDSPIGKVVVSAVYEGGAAERHGGIVKGDEIMAINGKIVTDYTLAEAEAALQKAWNQGDWIDLVVAVCPPKEYDDELTFF.

The tract at residues M1–K86 is N-terminal domain. 2 PDZ domains span residues E87 to L169 and K211 to G293. The interval G194–I532 is mediates interaction with MYO7B. S219 bears the Phosphoserine mark. The stretch at L318–D377 forms a coiled coil. A disordered region spans residues K401–R425. The segment covering V408–D419 has biased composition (acidic residues). Residues D452–V536 form the PDZ 3 domain.

Part of the IMAC/intermicrovillar adhesion complex/intermicrovillar tip-link complex composed of ANKS4B, MYO7B, USH1C, CDHR2 and CDHR5. Part of a complex composed of USH1C, USH1G and MYO7A. Interacts with F-actin. Interacts with USH2A. Interacts with SLC4A7. Interacts (via PDZ1 domain) with the C-terminus of USHBP1. Interacts (via N-terminus and PDZ 2 domain) with CDH23. Interacts with USH1G. Interacts with MYO7B. Interacts with CDHR2 and CDHR5; may mediate their interaction with MYO7B at the microvilli tip. Interacts (via PDZ 1 domain) with ANKS4B. Interacts (via PDZ 1 domain) with DOCK4.

The protein localises to the cytoplasm. Its subcellular location is the cytosol. It localises to the cytoskeleton. It is found in the cell projection. The protein resides in the microvillus. Its function is as follows. Anchoring/scaffolding protein that is a part of the functional network formed by USH1C, USH1G, CDH23 and MYO7A that mediates mechanotransduction in cochlear hair cells. Required for normal development and maintenance of cochlear hair cell bundles. As part of the intermicrovillar adhesion complex/IMAC plays a role in brush border differentiation, controlling microvilli organization and length. Probably plays a central regulatory role in the assembly of the complex, recruiting CDHR2, CDHR5 and MYO7B to the microvilli tips. In Bos taurus (Bovine), this protein is Harmonin (USH1C).